Consider the following 165-residue polypeptide: Anaerobic nitrite reductase GLB1 (165 aa).

Positions 12 to 162 (VFGEEQEALV…LVAAIKREMK (151 aa)) constitute a Globin domain. A Homodimerization motif is present at residues 45-49 (EIAPS). Heme b-binding residues include Ser-55, Lys-69, His-73, Arg-103, Thr-107, and His-108. Residues 115–127 (DGHFEVTGFALLE) carry the Homodimerization motif.

The protein belongs to the plant globin family. Homodimer. It depends on heme b as a cofactor. As to expression, in embryonic organs and at low levels in vegetative organs.

It localises to the cytoplasm. The protein localises to the nucleus. The catalysed reaction is Fe(III)-heme b-[protein] + nitric oxide + H2O = Fe(II)-heme b-[protein] + nitrite + 2 H(+). Functionally, phytoglobin that reduces nitrite to nitric oxide (NO) under anoxic conditions (e.g. during flooding or in waterlogged soil). May not function as an oxygen storage or transport protein. Has an unusually high affinity for O(2) through an hexacoordinate heme iron because of a very low dissociation constant. The chain is Anaerobic nitrite reductase GLB1 (HB) from Zea mays (Maize).